Consider the following 316-residue polypeptide: tRNA dimethylallyltransferase (316 aa).

Residue 19 to 26 participates in ATP binding; that stretch reads GPTASGKT. Residue 21 to 26 coordinates substrate; it reads TASGKT. Interaction with substrate tRNA stretches follow at residues 44 to 47, 168 to 172, and 249 to 254; these read DSAL, QRITR, and RCVGYR.

This sequence belongs to the IPP transferase family. In terms of assembly, monomer. Mg(2+) serves as cofactor.

The catalysed reaction is adenosine(37) in tRNA + dimethylallyl diphosphate = N(6)-dimethylallyladenosine(37) in tRNA + diphosphate. Catalyzes the transfer of a dimethylallyl group onto the adenine at position 37 in tRNAs that read codons beginning with uridine, leading to the formation of N6-(dimethylallyl)adenosine (i(6)A). The chain is tRNA dimethylallyltransferase from Colwellia psychrerythraea (strain 34H / ATCC BAA-681) (Vibrio psychroerythus).